A 477-amino-acid chain; its full sequence is Probable glycine dehydrogenase (decarboxylating) subunit 2 (477 aa).

K264 carries the N6-(pyridoxal phosphate)lysine modification.

Belongs to the GcvP family. C-terminal subunit subfamily. In terms of assembly, the glycine cleavage system is composed of four proteins: P, T, L and H. In this organism, the P 'protein' is a heterodimer of two subunits. Pyridoxal 5'-phosphate is required as a cofactor.

It catalyses the reaction N(6)-[(R)-lipoyl]-L-lysyl-[glycine-cleavage complex H protein] + glycine + H(+) = N(6)-[(R)-S(8)-aminomethyldihydrolipoyl]-L-lysyl-[glycine-cleavage complex H protein] + CO2. Its function is as follows. The glycine cleavage system catalyzes the degradation of glycine. The P protein binds the alpha-amino group of glycine through its pyridoxal phosphate cofactor; CO(2) is released and the remaining methylamine moiety is then transferred to the lipoamide cofactor of the H protein. This Fervidobacterium nodosum (strain ATCC 35602 / DSM 5306 / Rt17-B1) protein is Probable glycine dehydrogenase (decarboxylating) subunit 2.